We begin with the raw amino-acid sequence, 107 residues long: SH3 domain-binding glutamic acid-rich-like protein 2 (107 aa).

An SH3-binding motif is present at residues Q61 to P67.

It belongs to the SH3BGR family.

It is found in the nucleus. The protein is SH3 domain-binding glutamic acid-rich-like protein 2 (Sh3bgrl2) of Mus musculus (Mouse).